The sequence spans 88 residues: UPF0297 protein EAT1b_2723 (88 aa).

Belongs to the UPF0297 family.

The polypeptide is UPF0297 protein EAT1b_2723 (Exiguobacterium sp. (strain ATCC BAA-1283 / AT1b)).